The primary structure comprises 415 residues: ER-derived vesicles protein ERV46 (415 aa).

At 1 to 24 (MKRSTLLSLDAFAKTEEDVRVRTR) the chain is on the cytoplasmic side. The chain crosses the membrane as a helical span at residues 25–45 (AGGLITLSCILTTLFLLVNEW). Residues 46-376 (GQFNSVVTRP…VINKEQHGQT (331 aa)) are Lumenal-facing. Residues 377 to 397 (WSGFILNCITSIGGVLAVGTV) traverse the membrane as a helical segment. Topologically, residues 398–415 (MDKLFYKAQRSIWGKKSQ) are cytoplasmic. A Phenylalanine-tyrosine motif motif is present at residues 402 to 403 (FY).

Belongs to the ERGIC family. Interacts with ERV41.

It is found in the endoplasmic reticulum membrane. It localises to the golgi apparatus membrane. Constituent of COPII-coated endoplasmic reticulum-derived transport vesicles. Required for efficient transport of a subset of secretory proteins to the Golgi. The C-terminal Phe-Tyr motif is required for exit from the endoplasmic reticulum. Facilitates retrograde transport from the Golgi to the endoplasmic reticulum. This chain is ER-derived vesicles protein ERV46 (ERV46), found in Saccharomyces cerevisiae (strain ATCC 204508 / S288c) (Baker's yeast).